A 129-amino-acid chain; its full sequence is Trefoil factor 2 (129 aa).

Positions 1–23 (MGPRGLQLLAVLLALGLCAPAGA) are cleaved as a signal peptide. Pyrrolidone carboxylic acid is present on Gln24. P-type domains follow at residues 29–73 (CQCS…FHPL) and 79–122 (EQCV…FFPI). Cystine bridges form between Cys29–Cys127, Cys31–Cys58, Cys42–Cys57, Cys52–Cys69, Cys81–Cys107, Cys91–Cys106, and Cys101–Cys118.

The protein localises to the secreted. Inhibits gastrointestinal motility and gastric acid secretion. Could function as a structural component of gastric mucus, possibly by stabilizing glycoproteins in the mucus gel through interactions with carbohydrate side chains. The polypeptide is Trefoil factor 2 (TFF2) (Canis lupus familiaris (Dog)).